The primary structure comprises 378 residues: Wnt inhibitory factor 1 (378 aa).

An N-terminal signal peptide occupies residues 1 to 28; that stretch reads MAFRTPAVQLHLKACVLLLLGGLLEAAY. Residues 36 to 175 form the WIF domain; the sequence is MWIDANQARI…PHNAIFFKTC (140 aa). The N-linked (GlcNAc...) asparagine glycan is linked to N86. 6 disulfides stabilise this stretch: C138–C175, C180–C190, C184–C196, C212–C222, C216–C228, and C230–C239. EGF-like domains lie at 176–205, 208–240, 243–272, 272–304, and 305–336; these read QRAK…FYGV, EKAL…SSCE, NCST…VRCE, ELSK…DLCS, and KAVC…RHCN. N-linked (GlcNAc...) asparagine glycosylation occurs at N243. 9 cysteine pairs are disulfide-bonded: C244/C254, C248/C260, C262/C271, C276/C286, C280/C292, C294/C303, C308/C318, C312/C324, and C326/C335. A disordered region spans residues 343–378; that stretch reads VSNSQRVSPSKHKSPSVAAAKEAPETSQPSETNYVV. Over residues 367–378 the composition is skewed to polar residues; that stretch reads ETSQPSETNYVV.

As to expression, highly expressed in unsegmented paraxial mesoderm.

It is found in the secreted. Functionally, binds to WNT proteins and inhibits their activities. May be involved in mesoderm segmentation. The chain is Wnt inhibitory factor 1 (wif1) from Danio rerio (Zebrafish).